Consider the following 101-residue polypeptide: Protein S100-A3 (101 aa).

Ala2 is subject to N-acetylalanine. EF-hand domains lie at 12 to 47 (IVCT…TWTP) and 50 to 85 (FREC…LCLY). The Ca(2+) site is built by Lys28 and Glu33. A disulfide bridge connects residues Cys30 and Cys68. Arg51 carries the citrulline; by PAD3 modification. The Ca(2+) site is built by Asp63, Asn65, Asp67, Glu69, and Glu74. An intrachain disulfide couples Cys81 to Cys99. Cys83, Cys86, His87, and Cys93 together coordinate Zn(2+).

Belongs to the S-100 family. In terms of assembly, homodimer and homotetramer for the citrullinated form. In terms of processing, more than half of the arginine residues undergo citrullination by PAD1 and PAD2. Arg-51 is specifically citrullinated by PAD3 and promotes tetramerization. As to expression, skin specific, specifically expressed at the inner endocuticle of hair fibers.

The protein localises to the cytoplasm. Binds both calcium and zinc. May be involved in calcium-dependent cuticle cell differentiation, hair shaft and hair cuticular barrier formation. This Homo sapiens (Human) protein is Protein S100-A3 (S100A3).